A 406-amino-acid chain; its full sequence is Sorting nexin-6 (406 aa).

Methionine 1 carries the N-acetylmethionine modification. At methionine 2 the chain carries N-acetylmethionine; in Sorting nexin-6, N-terminally processed. The interval 2–179 (MEGLDDGPDF…NQDLSVRGKN (178 aa)) is interaction with PIM1. One can recognise a PX domain in the interval 26 to 173 (LQSDAALQVD…HVFLEYNQDL (148 aa)). A 1,2-diacyl-sn-glycero-3-phospho-(1D-myo-inositol-4,5-bisphosphate) is bound by residues 41–47 (SERDKVK), 100–106 (FDASREK), and 114–117 (EGSM). A phosphoserine mark is found at serine 116 and serine 194. Residues 182-199 (EKLEDFFKNMVKSADGVI) are membrane-binding amphipathic helix. In terms of domain architecture, BAR spans 203-406 (VKDVDDFFEH…NCLAVLNGDT (204 aa)).

It belongs to the sorting nexin family. As to quaternary structure, forms heterodimers with BAR domain-containing sorting nexins SNX1 and SNX2. The heterodimers are proposed to self-assemble into helical arrays on the membrane to stabilize and expand local membrane curvature underlying endosomal tubule formation. Thought to be a component of the originally described retromer complex (also called SNX-BAR retromer) which is a pentamer containing the heterotrimeric retromer cargo-selective complex (CSC), also described as vacuolar protein sorting subcomplex (VPS), and a heterodimeric membrane-deforming subcomplex formed between SNX1 or SNX2 and SNX5 or SNX6 (also called SNX-BAR subcomplex); the respective CSC and SNX-BAR subcomplexes associate with low affinity. Interacts with SNX1, SNX2, VPS26A, VPS29, VPS35, CDKN1B, TGFB receptors, BACE1, BRMS1, PIP5K1C isoform 3. Interacts with DCTN1; the association with DCTN1 is involved in movement of retromer-c ontaining vesicles toward the TGN. Interacts with CDKN1B and GIT1. Interacts with PIM1; translocating SNX6 to the nucleus. In vitro phosphorylated by PIM1; not affecting PIM1-dependent nuclear translocation.

The protein resides in the early endosome. It localises to the early endosome membrane. Its subcellular location is the cytoplasmic vesicle. The protein localises to the cytoplasm. It is found in the nucleus. Involved in several stages of intracellular trafficking. Interacts with membranes phosphatidylinositol 3,4-bisphosphate and/or phosphatidylinositol 4,5-bisphosphate. Acts in part as component of the retromer membrane-deforming SNX-BAR subcomplex. The SNX-BAR retromer mediates retrograde transport of cargo proteins from endosomes to the trans-Golgi network (TGN) and is involved in endosome-to-plasma membrane transport for cargo protein recycling. The SNX-BAR subcomplex functions to deform the donor membrane into a tubular profile called endosome-to-TGN transport carrier (ETC). Does not have in vitro vesicle-to-membrane remodeling activity. Involved in retrograde endosome-to-TGN transport of lysosomal enzyme receptor IGF2R. May function as link between transport vesicles and dynactin. Negatively regulates retrograde transport of BACE1 from the cell surface to the trans-Golgi network. Involved in E-cadherin sorting and degradation; inhibits PIP5K1C isoform 3-mediated E-cadherin degradation. In association with GIT1 involved in EGFR degradation. Promotes lysosomal degradation of CDKN1B. May contribute to transcription regulation. The polypeptide is Sorting nexin-6 (SNX6) (Homo sapiens (Human)).